The following is a 189-amino-acid chain: Inner membrane-spanning protein YciB (189 aa).

The next 5 membrane-spanning stretches (helical) occupy residues 3 to 23, 47 to 67, 76 to 96, 121 to 141, and 149 to 169; these read LLID…WGIY, IEPM…ATLL, WKPT…QLFF, WSWT…AHAF, and FKLF…ALYL.

This sequence belongs to the YciB family.

Its subcellular location is the cell inner membrane. Plays a role in cell envelope biogenesis, maintenance of cell envelope integrity and membrane homeostasis. This is Inner membrane-spanning protein YciB from Paracidovorax citrulli (strain AAC00-1) (Acidovorax citrulli).